The primary structure comprises 114 residues: uncharacterized protein (114 aa).

Disordered stretches follow at residues Gly-26–Gly-45 and Pro-72–Ala-98.

This is an uncharacterized protein from Homo sapiens (Human).